The chain runs to 344 residues: Programmed cell death protein 2 (344 aa).

Cys-135, Cys-138, Cys-146, Cys-149, Cys-155, His-159, His-168, and Cys-172 together coordinate Zn(2+). The MYND-type; atypical zinc finger occupies 135 to 172; sequence CRVCGCSGPKRCSRCHKAHYCSKEHQSLDWRLGHKQAC.

In terms of processing, ubiquitinated by PRKN, promoting proteasomal degradation.

It is found in the nucleus. May be a DNA-binding protein with a regulatory function. May play an important role in cell death and/or in regulation of cell proliferation. This Bos taurus (Bovine) protein is Programmed cell death protein 2 (PDCD2).